A 66-amino-acid polypeptide reads, in one-letter code: MPKMKTKRAAAKRFKITGTGKVMRMRHARNHNRLKKAPRVRRSFDKMAPVHPSDVHRVKPLLPYAW.

This sequence belongs to the bacterial ribosomal protein bL35 family.

This Thermomicrobium roseum (strain ATCC 27502 / DSM 5159 / P-2) protein is Large ribosomal subunit protein bL35.